Consider the following 228-residue polypeptide: Death domain-containing membrane protein NRADD (228 aa).

Topologically, residues 1–52 are extracellular; the sequence is MLHNVSKGVVYSDTALKGQDGDREGMWVGAGGALAPNTSSLFPPEPPGASSN. N-linked (GlcNAc...) asparagine glycosylation is found at Asn4 and Asn37. A helical; Signal-anchor for type III membrane protein transmembrane segment spans residues 53-73; that stretch reads IIPVYCALLATVVLGLLAYVA. At 74-228 the chain is on the cytoplasmic side; sequence FKCWRSRKQR…SSPAEGCSVV (155 aa). Positions 143–222 constitute a Death domain; sequence EEVQRLLILG…DVVQVLSSPA (80 aa).

As to quaternary structure, interacts with NTRK1. Isoform 1 and isoform 2 interact with NGFR. Interacts with SORT1. In terms of processing, isoform 1 is N-glycosylated. Isoform 2 is not N-glycosylated. Detected in embryo, including embryonic brain. Detected at very low levels in adult testis, spleen, thymus and lung.

The protein resides in the cell membrane. The protein localises to the nucleus. Its function is as follows. Modulates NTRK1 signaling. Can activate several intracellular signaling pathways, leading to activation of JUN. Promotes translocation of SORT1 to the cell membrane, and thereby hinders lysosomal degradation of SOTR1 and promotes its interaction with NGFR. Both isoform 1 and isoform 2 promote apoptosis. The polypeptide is Death domain-containing membrane protein NRADD (Nradd) (Rattus norvegicus (Rat)).